Consider the following 215-residue polypeptide: Pyrrolidone-carboxylate peptidase (215 aa).

Catalysis depends on residues Glu80, Cys143, and His167.

This sequence belongs to the peptidase C15 family. Homotetramer.

Its subcellular location is the cytoplasm. It carries out the reaction Release of an N-terminal pyroglutamyl group from a polypeptide, the second amino acid generally not being Pro.. Removes 5-oxoproline from various penultimate amino acid residues except L-proline. This Bacillus cereus (strain ATCC 10987 / NRS 248) protein is Pyrrolidone-carboxylate peptidase.